Consider the following 208-residue polypeptide: Uracil phosphoribosyltransferase (208 aa).

Residues Arg78, Arg103, and 130 to 138 contribute to the 5-phospho-alpha-D-ribose 1-diphosphate site; that span reads DPMLATGGT. Uracil-binding positions include Ile193 and 198–200; that span reads GDA. Position 199 (Asp199) interacts with 5-phospho-alpha-D-ribose 1-diphosphate.

The protein belongs to the UPRTase family. Mg(2+) is required as a cofactor.

It carries out the reaction UMP + diphosphate = 5-phospho-alpha-D-ribose 1-diphosphate + uracil. The protein operates within pyrimidine metabolism; UMP biosynthesis via salvage pathway; UMP from uracil: step 1/1. Its activity is regulated as follows. Allosterically activated by GTP. Functionally, catalyzes the conversion of uracil and 5-phospho-alpha-D-ribose 1-diphosphate (PRPP) to UMP and diphosphate. The polypeptide is Uracil phosphoribosyltransferase (Nitratidesulfovibrio vulgaris (strain ATCC 29579 / DSM 644 / CCUG 34227 / NCIMB 8303 / VKM B-1760 / Hildenborough) (Desulfovibrio vulgaris)).